A 567-amino-acid polypeptide reads, in one-letter code: Phenylalanine--tRNA ligase beta subunit (567 aa).

One can recognise a B5 domain in the interval 284 to 359 (FAVRTKHVSH…RAYDFNDLTP (76 aa)). Mg(2+) is bound by residues D337, D343, D346, and D347.

Belongs to the phenylalanyl-tRNA synthetase beta subunit family. Type 2 subfamily. In terms of assembly, tetramer of two alpha and two beta subunits. The cofactor is Mg(2+).

Its subcellular location is the cytoplasm. It catalyses the reaction tRNA(Phe) + L-phenylalanine + ATP = L-phenylalanyl-tRNA(Phe) + AMP + diphosphate + H(+). This chain is Phenylalanine--tRNA ligase beta subunit, found in Halobacterium salinarum (strain ATCC 29341 / DSM 671 / R1).